A 119-amino-acid polypeptide reads, in one-letter code: Holo-[acyl-carrier-protein] synthase (119 aa).

Asp-8 and Glu-50 together coordinate Mg(2+).

Belongs to the P-Pant transferase superfamily. AcpS family. It depends on Mg(2+) as a cofactor.

The protein resides in the cytoplasm. The catalysed reaction is apo-[ACP] + CoA = holo-[ACP] + adenosine 3',5'-bisphosphate + H(+). In terms of biological role, transfers the 4'-phosphopantetheine moiety from coenzyme A to a Ser of acyl-carrier-protein. The protein is Holo-[acyl-carrier-protein] synthase of Clavibacter sepedonicus (Clavibacter michiganensis subsp. sepedonicus).